Consider the following 470-residue polypeptide: Argininosuccinate lyase (470 aa).

The protein belongs to the lyase 1 family. Argininosuccinate lyase subfamily.

It is found in the cytoplasm. The catalysed reaction is 2-(N(omega)-L-arginino)succinate = fumarate + L-arginine. Its pathway is amino-acid biosynthesis; L-arginine biosynthesis; L-arginine from L-ornithine and carbamoyl phosphate: step 3/3. This Mycobacterium leprae (strain Br4923) protein is Argininosuccinate lyase.